A 73-amino-acid polypeptide reads, in one-letter code: Large ribosomal subunit protein bL31 (73 aa).

Cysteine 16, cysteine 18, cysteine 38, and cysteine 41 together coordinate Zn(2+).

It belongs to the bacterial ribosomal protein bL31 family. Type A subfamily. As to quaternary structure, part of the 50S ribosomal subunit. Zn(2+) is required as a cofactor.

Its function is as follows. Binds the 23S rRNA. The chain is Large ribosomal subunit protein bL31 from Vibrio vulnificus (strain CMCP6).